The following is a 504-amino-acid chain: L-carnitine/gamma-butyrobetaine antiporter (504 aa).

A run of 12 helical transmembrane segments spans residues 10 to 30, 51 to 71, 92 to 112, 143 to 163, 195 to 215, 231 to 251, 263 to 283, 316 to 336, 347 to 367, 398 to 418, 446 to 466, and 475 to 495; these read MEPK…WLTV, WGWA…WLVF, IFMM…SIEI, GPLP…FFFV, FYLV…TPLV, LDAI…ACGL, SYLS…SFIM, WSVF…IFLA, LCFG…TVLG, WAAL…CFIA, LLVR…LLAL, and AIIA…LSFI.

The protein belongs to the BCCT transporter (TC 2.A.15) family. CaiT subfamily. In terms of assembly, homotrimer.

The protein resides in the cell inner membrane. The catalysed reaction is 4-(trimethylamino)butanoate(in) + (R)-carnitine(out) = 4-(trimethylamino)butanoate(out) + (R)-carnitine(in). The protein operates within amine and polyamine metabolism; carnitine metabolism. Functionally, catalyzes the exchange of L-carnitine for gamma-butyrobetaine. The protein is L-carnitine/gamma-butyrobetaine antiporter of Shigella dysenteriae serotype 1 (strain Sd197).